Reading from the N-terminus, the 509-residue chain is CDK5RAP3 protein homolog (509 aa).

This sequence belongs to the CDK5RAP3 family.

The protein resides in the nucleus. Its subcellular location is the cytoplasm. Functionally, substrate adapter of E3 ligase complexes mediating ufmylation, the covalent attachment of the ubiquitin-like modifier UFM1 to substrate proteins, and which is involved in various processes, such as ribosome recycling and reticulophagy (also called ER-phagy). This Drosophila melanogaster (Fruit fly) protein is CDK5RAP3 protein homolog.